The sequence spans 220 residues: Homeobox-leucine zipper protein ATHB-21 (220 aa).

A disordered region spans residues 26-48; that stretch reads VPQQGGEAKPTRRRKRKSKSVVV. The homeobox DNA-binding region spans 58-117; sequence GWFRKRKLSDEQVRMLEISFEDDHKLESERKDRLASELGLDPRQVAVWFQNRRARWKNKR. Positions 118–146 are leucine-zipper; it reads VEDEYTKLKNAYETTVVEKCRLDSEVIHL.

The protein belongs to the HD-ZIP homeobox family. Class I subfamily. Widely expressed.

Its subcellular location is the nucleus. Probable transcription factor. This Arabidopsis thaliana (Mouse-ear cress) protein is Homeobox-leucine zipper protein ATHB-21 (ATHB-21).